Here is a 2672-residue protein sequence, read N- to C-terminus: eIF-2-alpha kinase activator GCN1 (2672 aa).

11 HEAT repeats span residues 5–42, 79–117, 174–211, 227–267, 329–366, 372–410, 509–549, 611–648, 706–745, 902–932, and 933–970; these read LNWEDISPVLEKGTRESHVSKRVPFLQDISQLVRQETL, NLEPCLLENFIRFISDVVISNPATKAVADYLNLLDWINS, CIFQTTVKAFLKCLKDNDDSISFMKISIKTVLESYSKL, QAAL…NPPS, FASSKLINQYFSSFKSSKEVVRSVSLQSMIILLRKISN, EDLTKLIDEIFKNIKSNLNADYKSLISKILIEIPLTHYE, HGHA…NSSI, KYVTSVLLAITSELPDKEASIKVLINALVIAQWNIFNI, IQPNEFTPILCKTIEADLTADDFSRLSEEDFEIFAGEEGV, QDYLQEPLVELLTRVLFRIKFVSNQAAIDSI, and SLTYILPLLINVLEKGKAIALKNADKPVVKAEFVEEDE. One copy of the HEAT 12; degenerate repeat lies at 975 to 994; that stretch reads LLLAMEIISVHAEAFEDPSI. The stretch at 995–1030 is one HEAT 13; degenerate repeat; sequence PRISIVEVLLSLLSLPSKAKIAKDCFNALCQSISVA. HEAT repeat units lie at residues 1031–1067, 1099–1138, 1185–1224, 1243–1281, 1284–1321, 1363–1401, 1405–1442, 1444–1480, 1484–1521, 1523–1559, 1561–1598, 1603–1640, 1641–1679, 1681–1717, 1721–1758, 1760–1796, 1825–1862, 1863–1903, 1905–1942, 1947–1984, 1985–2024, 2026–2055, 2057–2095, 2097–2134, 2138–2175, 2206–2243, 2250–2286, 2290–2328, 2347–2384, 2392–2429, 2450–2487, and 2506–2546; these read PNQEDLDMILSNLLSPNQFVRSTILETLDNEFELEPF, VVNDELLKSLFPLFNQDDSGLRLFAANAYAFGAVSLFTSE, STVAITLKIMAKAFSAEDDTVVNIIKFLVDDGGLVDREPI, QNSKDLIPIFEEALSSSTDSALKENVIILYGTLARHLQQ, ARIHTIIERLLSTLDTPSADIQQAVSACIAPLVFQFKQ, LSEFDIIRNLIEAAEDKKEPKRRESVGFCFQYLSESLGK, PYVIEILPNILKNLGDAVPEVRDATARATKAIMAHTTG, GVKKLIPVAVSNLDEIAWRTKRGSVQLLGNMAYLDPT, ASLSTIVPEIVGVLNDSHKEVRKAADESLKRFGEVIRN, EIQKLVPVLLQAIGDPTKYTEEALDSLIQTQFVHYID, PSLALIIHIIHRGMHDRSANIKRKACKIVGNMAILVDT, PYLQQLIDEVEIAMVDPVPNTRATAARALGALVERLGE, EQFPDLIPRLLDTLSDESKSGDRLGSAQALAEVISGLGL, KLDEMLPTILAGVTNFRAYIREGFMPLLLFLPVCFGS, PYINQIIQPILSGLADNDENIRDTALKAGKLIVKNYAT, AVDLLLPELERGMFDENDRIRLSSVQLTGELLFQVTG, DRRDRILAALFVCRNDTSGIVRATTVDIWKALVPNTPR, AVKE…RVGG, ALSQLLPSLEESLIETSNSDSRQGVCIALYELIESAST, QFQSTIVNIIRTALIDESATVREAAALSFDVFQDVVGK, TAVDEVLPYLLHMLESSDNSDFALLGLQEIMSKKSDVIFP, LIPTLLAPPIDAFRASALGSLAEVAGSALY, RLSIIINALVDAIIGTSEDESTKGALELALDRVFLSVND, EGLHPLLQQIMSLLKSDNIEKRIAVLERLPNFFDKTVL, VYIPNFVSHAILSLDDEDQRVVNGNFNALSTLLKKVDK, RGPNCVLPIFLHGLMYGSNDEREESALAIADVVSKTPA, VSVITGPLIRVVGERFSSDIKAAILFALNVLFIKIPM, PFIPQLQRTFVKSLSDATNETLRLRAAKALGALIEHQPR, GVKTAMLKALLEVIMKAGSKLNENSKTNIVNLVEEEML, VAYAKLIGSLSEILSNDEAHKILQDKVLNADLDGETGK, GLIDEFVSYILNAIRSPDVYFGENGTIAAGKLLLLEGE, and ENIN…FKFD. An EF3-like region region spans residues 1330 to 1641; that stretch reads LMEKLLNPTV…GALVERLGEE (312 aa). Residues 2207–2356 form an RWDBD region region; sequence GPNCVLPIFL…GVKTAMLKAL (150 aa).

This sequence belongs to the GCN1 family. In terms of assembly, interacts (via N- and C-terminus) with GCN2 (via N-terminal RWD domain); this interaction stimulates GCN2 kinase activity in a GCN20-dependent manner in response to amino acid starvation. Interacts (via C-terminus) with GCN20 (via N-terminus); this interaction stimulates GCN2 kinase activity in response to amino acid starvation. The GCN1-GCN20 complex interacts with GCN2 on translating ribosomes in amino acid-starved cells; GCN1 may bind near the ribosomal A-site and promotes the transfer of uncharged tRNAs from the A-site to the tRNA-binding domain in GCN2 for its subsequent kinase activation, and hence allowing GCN4 translational activation and derepression of amino acid biosynthetic genes. Interacts (via C-terminus) with YIH1 (via N-terminus); this interaction reduces the GCN1-GCN20 complex formation and prevents the interaction of GCN1 with GCN2 and GCN2 kinase activation in amino acid-starved cells. Interacts with GIR2; this interaction prevents the interaction of GCN1 with GCN2 and GCN2 kinase activation in amino acid-starved cells. Interacts (via middle region) with RPS10A and RPS10B; these interactions are direct and promote GCN2 kinase activation. Associates (via N-terminus) with ribosomes; this association is stimulated in a ATP- and GCN20-dependent manner and is necessary to activate GCN2 kinase activity.

The protein resides in the cytoplasm. Its function is as follows. Ribosome collision sensor that activates a translation quality control pathway when a ribosome has stalled during translation. Directly binds to the ribosome and acts as a sentinel for colliding ribosomes. GCN1 also acts as a positive activator of the integrated stress response (ISR) by mediating activation of GCN2 in response to low amino acid, carbon, or purine availability. Component of the GCN1-GCN20 complex that forms a complex with GCN2 on translating ribosomes: during this process, GCN1 acts as a chaperone to facilitate delivery of uncharged tRNAs that enter the A-site of ribosomes to the tRNA-binding domain of GCN2, and hence stimulating GCN2 kinase activity, leading to phosphorylation of eukaryotic translation initiation factor 2 (eIF-2-alpha/SUI2). eIF-2-alpha/SUI2 phosphorylation converts eIF-2-alpha/SUI2 into a global protein synthesis inhibitor, leading to a global attenuation of cap-dependent translation, and thus to a reduced overall utilization of amino acids, while concomitantly initiating the preferential translation of ISR-specific mRNAs, such as the transcriptional activator GCN4, and hence allowing GCN4-mediated reprogramming of amino acid biosynthetic gene expression to alleviate nutrient depletion. The polypeptide is eIF-2-alpha kinase activator GCN1 (Saccharomyces cerevisiae (strain ATCC 204508 / S288c) (Baker's yeast)).